Here is a 372-residue protein sequence, read N- to C-terminus: tRNA-specific 2-thiouridylase MnmA (372 aa).

ATP-binding positions include 11–18 and Met37; that span reads GMSGGVDS. Residues 97 to 99 form an interaction with target base in tRNA region; sequence NPD. The active-site Nucleophile is Cys102. Cys102 and Cys199 are disulfide-bonded. ATP is bound at residue Gly126. Residues 149-151 form an interaction with tRNA region; that stretch reads KDQ. Residue Cys199 is the Cysteine persulfide intermediate of the active site. The interaction with tRNA stretch occupies residues 309–310; that stretch reads RY.

Belongs to the MnmA/TRMU family.

The protein resides in the cytoplasm. It carries out the reaction S-sulfanyl-L-cysteinyl-[protein] + uridine(34) in tRNA + AH2 + ATP = 2-thiouridine(34) in tRNA + L-cysteinyl-[protein] + A + AMP + diphosphate + H(+). Catalyzes the 2-thiolation of uridine at the wobble position (U34) of tRNA, leading to the formation of s(2)U34. This Staphylococcus aureus (strain bovine RF122 / ET3-1) protein is tRNA-specific 2-thiouridylase MnmA.